Here is a 344-residue protein sequence, read N- to C-terminus: Heat-inducible transcription repressor HrcA (344 aa).

The protein belongs to the HrcA family.

Negative regulator of class I heat shock genes (grpE-dnaK-dnaJ and groELS operons). Prevents heat-shock induction of these operons. The sequence is that of Heat-inducible transcription repressor HrcA from Geobacillus kaustophilus (strain HTA426).